A 228-amino-acid chain; its full sequence is Probable octanoyltransferase (228 aa).

The region spanning 27 to 198 (SGGDDAFILV…AFEEVFEAKV (172 aa)) is the BPL/LPL catalytic domain. Substrate is bound by residues 65–72 (RGGDATYH), 129–131 (SIG), and 142–144 (GVA). Residue cysteine 160 is the Acyl-thioester intermediate of the active site.

The protein belongs to the LipB family.

The protein localises to the cytoplasm. The enzyme catalyses octanoyl-[ACP] + L-lysyl-[protein] = N(6)-octanoyl-L-lysyl-[protein] + holo-[ACP] + H(+). It participates in protein modification; protein lipoylation via endogenous pathway; protein N(6)-(lipoyl)lysine from octanoyl-[acyl-carrier-protein]: step 1/2. Catalyzes the transfer of endogenously produced octanoic acid from octanoyl-acyl-carrier-protein onto the lipoyl domains of lipoate-dependent enzymes. Lipoyl-ACP can also act as a substrate although octanoyl-ACP is likely to be the physiological substrate. This chain is Probable octanoyltransferase, found in Pyrobaculum calidifontis (strain DSM 21063 / JCM 11548 / VA1).